The chain runs to 485 residues: Maturase K (485 aa).

Belongs to the intron maturase 2 family. MatK subfamily.

It localises to the plastid. The protein localises to the chloroplast. Functionally, usually encoded in the trnK tRNA gene intron. Probably assists in splicing its own and other chloroplast group II introns. The polypeptide is Maturase K (Malus domestica (Apple)).